The chain runs to 89 residues: Small ribosomal subunit protein uS15 (89 aa).

The protein belongs to the universal ribosomal protein uS15 family. As to quaternary structure, part of the 30S ribosomal subunit. Forms a bridge to the 50S subunit in the 70S ribosome, contacting the 23S rRNA.

In terms of biological role, one of the primary rRNA binding proteins, it binds directly to 16S rRNA where it helps nucleate assembly of the platform of the 30S subunit by binding and bridging several RNA helices of the 16S rRNA. Its function is as follows. Forms an intersubunit bridge (bridge B4) with the 23S rRNA of the 50S subunit in the ribosome. The polypeptide is Small ribosomal subunit protein uS15 (Kineococcus radiotolerans (strain ATCC BAA-149 / DSM 14245 / SRS30216)).